Here is a 252-residue protein sequence, read N- to C-terminus: Small ribosomal subunit protein uS2 (252 aa).

It belongs to the universal ribosomal protein uS2 family.

In Chlorobium phaeobacteroides (strain DSM 266 / SMG 266 / 2430), this protein is Small ribosomal subunit protein uS2.